The following is a 1416-amino-acid chain: Telomere-associated protein RIF1 (1416 aa).

Disordered regions lie at residues 789-858, 886-984, 1021-1054, and 1166-1186; these read PIRK…PVVQ, PEVA…HLTG, ARAQ…QAPP, and TART…APEE. Residues 928 to 945 show a composition bias toward low complexity; sequence GSSGDPAASAGAVAAGEM. A compositionally biased stretch (polar residues) spans 1029-1050; the sequence is QVSTPTSELNELTGTDHTSTPI.

This sequence belongs to the RIF1 family. Highly divergent. As to quaternary structure, interacts with Pp1-87b. Interacts with SuUR (via SNF2-like region). In terms of processing, phosphorylated, probably by Cdk1; phosphorylation regulates dissociation from heterochromatin. As to expression, expressed in nurse cells and follicle cells in the adult female (at protein level). Detected in adult at extremely low levels.

The protein resides in the nucleus. Its subcellular location is the chromosome. It is found in the telomere. Its function is as follows. Regulates the timing of initiation of DNA replication. Functions in copy number control by promoting the underreplication of DNA, which is found in many late replicating euchromatic regions of salivary gland polytene chromosomes. Promotes underreplication by localizing to active DNA replication forks in a partially SuUR-dependent manner, and inhibiting replication fork progression. Might also work as an adapter to recruit Pp1-87B to multiple sites on the chromosome and may function with Pp1-87B to mediate underreplication. Plays an essential role in embryonic development, in the transition from larvae to pupae and, probably, in proliferating tissues later on. In embryos, during mid-blastula transition, binds to and selectively delays the replication of large blocks of repetitive DNA satellite sequences during S phase in response to the activity of Cdk1; maternal Rif1 is specifically required for the normal extension of S phase 14. Unlike mammalian orthologs, does not appear to play a role in DNA damage repair. The protein is Telomere-associated protein RIF1 of Drosophila melanogaster (Fruit fly).